We begin with the raw amino-acid sequence, 233 residues long: Probable septum site-determining protein MinC (233 aa).

The segment at 98–123 (LTEGKEKAPRPAPSEPTPPPPPVANQ) is disordered. Residues 107–120 (RPAPSEPTPPPPPV) are compositionally biased toward pro residues.

This sequence belongs to the MinC family. Interacts with MinD and FtsZ.

In terms of biological role, cell division inhibitor that blocks the formation of polar Z ring septums. Rapidly oscillates between the poles of the cell to destabilize FtsZ filaments that have formed before they mature into polar Z rings. Prevents FtsZ polymerization. The polypeptide is Probable septum site-determining protein MinC (Klebsiella pneumoniae (strain 342)).